A 42-amino-acid polypeptide reads, in one-letter code: MVNWELLKNPINWLIVILMLTIAGMAATLVCNHFGKNAVTSE.

Residues 11 to 31 (INWLIVILMLTIAGMAATLVC) traverse the membrane as a helical segment.

Heterodimer of P20 and P22; further multimerizes as hexamers of heterodimers. Part of the dodecameric portal complex that is composed of the packaging efficiency factor P6, the DNA packaging ATPase P9, and the internal heterododecamer P20/P22 which spans the virion inner membrane.

Its subcellular location is the virion membrane. Functionally, together with P22, forms the internal part of the portal complex embeded in the virion internal membrane and which plays critical roles in genome packaging and genome ejection. Both proteins multimerize as a single ring-shaped heterdodecamer arranged around a central channel and interact with the P6/P9 external part of the portal. The protein is Packaging protein P20 (XX) of Acinetobacter calcoaceticus (Arthrobacter siderocapsulatus).